We begin with the raw amino-acid sequence, 65 residues long: Large ribosomal subunit protein bL35 (65 aa).

The protein belongs to the bacterial ribosomal protein bL35 family.

This chain is Large ribosomal subunit protein bL35, found in Psychrobacter sp. (strain PRwf-1).